The primary structure comprises 266 residues: Indole-3-glycerol phosphate synthase (266 aa).

This sequence belongs to the TrpC family.

The enzyme catalyses 1-(2-carboxyphenylamino)-1-deoxy-D-ribulose 5-phosphate + H(+) = (1S,2R)-1-C-(indol-3-yl)glycerol 3-phosphate + CO2 + H2O. Its pathway is amino-acid biosynthesis; L-tryptophan biosynthesis; L-tryptophan from chorismate: step 4/5. The protein is Indole-3-glycerol phosphate synthase of Paracidovorax citrulli (strain AAC00-1) (Acidovorax citrulli).